A 465-amino-acid polypeptide reads, in one-letter code: D-ornithine/D-lysine decarboxylase (465 aa).

An N6-(pyridoxal phosphate)lysine modification is found at Lys-80. Residues Gly-259 and 307-310 (EPGR) each bind pyridoxal 5'-phosphate. Cys-387 acts as the Proton donor in catalysis. Residue Tyr-422 coordinates pyridoxal 5'-phosphate.

It belongs to the Orn/Lys/Arg decarboxylase class-II family. In terms of assembly, homodimer. Pyridoxal 5'-phosphate is required as a cofactor.

It catalyses the reaction D-ornithine + H(+) = putrescine + CO2. It carries out the reaction D-lysine + H(+) = cadaverine + CO2. Catalyzes the decarboxylation of D-ornithine and D-lysine. Ornithine is likely the physiological substrate. Has no detectable diaminopimelate decarboxylase activity in vitro. This chain is D-ornithine/D-lysine decarboxylase, found in Salmonella typhimurium (strain LT2 / SGSC1412 / ATCC 700720).